We begin with the raw amino-acid sequence, 96 residues long: Small ribosomal subunit protein bS6 (96 aa).

It belongs to the bacterial ribosomal protein bS6 family.

In terms of biological role, binds together with bS18 to 16S ribosomal RNA. The polypeptide is Small ribosomal subunit protein bS6 (Streptococcus thermophilus (strain ATCC BAA-491 / LMD-9)).